Consider the following 461-residue polypeptide: MSVRIEHDTFGEIEVPADKYWGAQTERSKRNFPVGKERMPIEVVYGFAQLKRAAALANFDLGKLSEAKKDAIVYACDQILSGELDEHFPLVVWQTGSGTQSNMNVNEVVSYVANMYLKDHQIDESIHPNDDVNESQSSNDTFPTAMHVALYQEVETKLEPALKLLRNTLKEKEDKFESIIKIGRTHLQDATPIKLGQEISGWRYMLDRCEIMLSESKKHILNLAIGGTAVGTGINAHPEFGDKVAHYISENTGYPFVSSENKFHALTAHDEVVQLHGTLKALAGDLMKIANDVRWLASGPRAGLAEISIPENEPGSSIMPGKVNPTQCEMLTMVAVQVMGNDTVVGFASSQGNFELNVYKPVIMHNTLQSIYLLADGMETFNNNCAVGIEPIEENIDNYLNQSLMLVTALNPHIGYEKAAQIAKKAHKEGLTLKESAIQTGYVTEEQFEAWIKPEDMVDPH.

Residues 97-99 (SGT), 127-130 (HPND), 137-139 (SSN), and threonine 185 each bind substrate. The Proton donor/acceptor role is filled by histidine 186. The active site involves serine 316. Residues serine 317 and 322 to 324 (KVN) each bind substrate.

This sequence belongs to the class-II fumarase/aspartase family. Fumarase subfamily. In terms of assembly, homotetramer.

The protein resides in the cytoplasm. The catalysed reaction is (S)-malate = fumarate + H2O. It participates in carbohydrate metabolism; tricarboxylic acid cycle; (S)-malate from fumarate: step 1/1. Functionally, involved in the TCA cycle. Catalyzes the stereospecific interconversion of fumarate to L-malate. In Staphylococcus aureus (strain Mu50 / ATCC 700699), this protein is Fumarate hydratase class II.